Consider the following 299-residue polypeptide: Inactive recombination-promoting nuclease-like protein RpnE (299 aa).

Belongs to the Rpn/YhgA-like nuclease family.

Upon expression has no effect on RecA-independent DNA recombination, cell viability or DNA damage. The polypeptide is Inactive recombination-promoting nuclease-like protein RpnE (yfaD) (Escherichia coli (strain K12)).